Consider the following 177-residue polypeptide: Adenine phosphoribosyltransferase (177 aa).

The protein belongs to the purine/pyrimidine phosphoribosyltransferase family. Homodimer.

The protein resides in the cytoplasm. It catalyses the reaction AMP + diphosphate = 5-phospho-alpha-D-ribose 1-diphosphate + adenine. It participates in purine metabolism; AMP biosynthesis via salvage pathway; AMP from adenine: step 1/1. Functionally, catalyzes a salvage reaction resulting in the formation of AMP, that is energically less costly than de novo synthesis. The chain is Adenine phosphoribosyltransferase from Pelodictyon phaeoclathratiforme (strain DSM 5477 / BU-1).